A 347-amino-acid polypeptide reads, in one-letter code: N-acetyl-gamma-glutamyl-phosphate reductase (347 aa).

Residue Cys153 is part of the active site.

Belongs to the NAGSA dehydrogenase family. Type 1 subfamily.

It is found in the cytoplasm. It catalyses the reaction N-acetyl-L-glutamate 5-semialdehyde + phosphate + NADP(+) = N-acetyl-L-glutamyl 5-phosphate + NADPH + H(+). The protein operates within amino-acid biosynthesis; L-arginine biosynthesis; N(2)-acetyl-L-ornithine from L-glutamate: step 3/4. Functionally, catalyzes the NADPH-dependent reduction of N-acetyl-5-glutamyl phosphate to yield N-acetyl-L-glutamate 5-semialdehyde. The protein is N-acetyl-gamma-glutamyl-phosphate reductase of Mycobacterium avium (strain 104).